The following is a 475-amino-acid chain: tRNA-2-methylthio-N(6)-dimethylallyladenosine synthase (475 aa).

The tract at residues 1-20 is disordered; it reads MEQNLTTERSETSSSRAGTA. Positions 25–145 constitute an MTTase N-terminal domain; it reads KKVFVKTYGC…LPSVVTRARA (121 aa). Residues cysteine 34, cysteine 70, cysteine 108, cysteine 186, cysteine 190, and cysteine 193 each contribute to the [4Fe-4S] cluster site. A Radical SAM core domain is found at 172–404; the sequence is RSRGVTAFLT…QALLAEQQRA (233 aa). The 63-residue stretch at 407–469 folds into the TRAM domain; sequence ESLVGTEIDL…GHSLFCEPAG (63 aa).

It belongs to the methylthiotransferase family. MiaB subfamily. In terms of assembly, monomer. [4Fe-4S] cluster serves as cofactor.

It localises to the cytoplasm. The catalysed reaction is N(6)-dimethylallyladenosine(37) in tRNA + (sulfur carrier)-SH + AH2 + 2 S-adenosyl-L-methionine = 2-methylsulfanyl-N(6)-dimethylallyladenosine(37) in tRNA + (sulfur carrier)-H + 5'-deoxyadenosine + L-methionine + A + S-adenosyl-L-homocysteine + 2 H(+). Catalyzes the methylthiolation of N6-(dimethylallyl)adenosine (i(6)A), leading to the formation of 2-methylthio-N6-(dimethylallyl)adenosine (ms(2)i(6)A) at position 37 in tRNAs that read codons beginning with uridine. This Chelativorans sp. (strain BNC1) protein is tRNA-2-methylthio-N(6)-dimethylallyladenosine synthase.